The following is a 359-amino-acid chain: MSDGAELKMAAQKRLLTGSDLDKWKASKTFEELLRFVSSLAQSVRGRENSEHAEPVSPAIEALEALLEEMQGIAAHHPVLQDAATSRFGKVEFRDFHKEVQARAEALVLQVDPSLTDEQAQELAVYLGNAWGDCKRIDYGSGHELNFVCFLYGLWKYGVLSEHDFTNAVLRVFVKYMDVMRVLETKYWLEPAGSHGVWGLDDYHFLPFLFGAFQLATHKHLKPKSIHNPEVVELFENRYLYFGCIAFINRVKTTASLRWHSPMLDDISGVRSWTKVSEGMVKMYKAEVLGKLPIMQHFFFSRFLPVPDGVSPPRTSEEELADCSEHAHSTWGDCCGIPIPSAVAASEATRKHSKPLPFD.

This sequence belongs to the PTPA-type PPIase family.

It localises to the cytoplasm. The catalysed reaction is [protein]-peptidylproline (omega=180) = [protein]-peptidylproline (omega=0). Its function is as follows. PPIases accelerate the folding of proteins. It catalyzes the cis-trans isomerization of proline imidic peptide bonds in oligopeptides. Acts as a regulatory subunit for PP2A-like phosphatases modulating their activity or substrate specificity, probably by inducing a conformational change in the catalytic subunit, a direct target of the PPIase. Can reactivate inactive phosphatase PP2A-phosphatase methylesterase complexes (PP2Ai) in presence of ATP and Mg(2+) by dissociating the inactive form from the complex. In Eremothecium gossypii (strain ATCC 10895 / CBS 109.51 / FGSC 9923 / NRRL Y-1056) (Yeast), this protein is Serine/threonine-protein phosphatase 2A activator 2 (RRD2).